The primary structure comprises 237 residues: Lectin (237 aa).

The N-linked (GlcNAc...) asparagine glycan is linked to N69. I106 is modified (blocked amino end (Ile)). Mn(2+) contacts are provided by E115 and D117. Ca(2+)-binding residues include D117, Y120, N122, and D127. Mn(2+)-binding residues include D127 and H132.

It belongs to the leguminous lectin family. Tetramer of two alpha and two beta chains. The N-terminus of alpha chain is blocked. The alpha and beta chains are produced by proteolytic processing, with probably the loss of intervening amino acid(s).

D-mannose/D-glucose-binding lectin. Requires Ca(2+) and Mn(2+) ions for full activity. In Lablab purpureus (Hyacinth bean), this protein is Lectin.